An 82-amino-acid polypeptide reads, in one-letter code: Small ribosomal subunit protein bS16 (82 aa).

Belongs to the bacterial ribosomal protein bS16 family.

The chain is Small ribosomal subunit protein bS16 from Clostridium botulinum (strain Okra / Type B1).